A 228-amino-acid polypeptide reads, in one-letter code: Ribonuclease 3 (228 aa).

One can recognise an RNase III domain in the interval 5 to 127 (KDALQDRLGY…LFGAIYLDGG (123 aa)). A Mg(2+)-binding site is contributed by E40. The active site involves D44. The Mg(2+) site is built by D113 and E116. E116 is an active-site residue. In terms of domain architecture, DRBM spans 154 to 224 (DPKTRLQEHL…AEQMLKRLED (71 aa)). The segment at 200–228 (AEGEAGSRRKAEQQAAEQMLKRLEDKHER) is disordered. The span at 218–228 (MLKRLEDKHER) shows a compositional bias: basic and acidic residues.

It belongs to the ribonuclease III family. Homodimer. Requires Mg(2+) as cofactor.

The protein resides in the cytoplasm. It catalyses the reaction Endonucleolytic cleavage to 5'-phosphomonoester.. Its function is as follows. Digests double-stranded RNA. Involved in the processing of primary rRNA transcript to yield the immediate precursors to the large and small rRNAs (23S and 16S). Processes some mRNAs, and tRNAs when they are encoded in the rRNA operon. Processes pre-crRNA and tracrRNA of type II CRISPR loci if present in the organism. This Alkalilimnicola ehrlichii (strain ATCC BAA-1101 / DSM 17681 / MLHE-1) protein is Ribonuclease 3.